The following is a 26-amino-acid chain: Ribulose bisphosphate carboxylase large chain (26 aa).

A propeptide spanning residues 1–2 (MS) is cleaved from the precursor. Pro3 is subject to N-acetylproline.

Belongs to the RuBisCO large chain family. Type I subfamily. As to quaternary structure, heterohexadecamer of 8 large chains and 8 small chains.

It is found in the plastid. The protein localises to the chloroplast. It catalyses the reaction 2 (2R)-3-phosphoglycerate + 2 H(+) = D-ribulose 1,5-bisphosphate + CO2 + H2O. The enzyme catalyses D-ribulose 1,5-bisphosphate + O2 = 2-phosphoglycolate + (2R)-3-phosphoglycerate + 2 H(+). In terms of biological role, ruBisCO catalyzes two reactions: the carboxylation of D-ribulose 1,5-bisphosphate, the primary event in carbon dioxide fixation, as well as the oxidative fragmentation of the pentose substrate in the photorespiration process. Both reactions occur simultaneously and in competition at the same active site. This Vicia faba (Broad bean) protein is Ribulose bisphosphate carboxylase large chain (rbcL).